Reading from the N-terminus, the 209-residue chain is uncharacterized protein (209 aa).

Positions 1 to 17 are cleaved as a signal peptide; the sequence is MKKLVTGLLALSLFLAA. The segment at 17–106 is disordered; that stretch reads ACGQDSDQQK…SGQTTNNQKS (90 aa). C18 is lipidated: N-palmitoyl cysteine. C18 carries the S-diacylglycerol cysteine lipid modification. Residues 23 to 70 are compositionally biased toward basic and acidic residues; sequence DQQKDSNKEKDDKAKTEQQDKKTNDSSKDKKDNKDDSKDVNKDNKDNS. Residues 71–106 are compositionally biased toward low complexity; that stretch reads ANDNQQQSNSNATNNDQNQTNNNQSNSGQTTNNQKS.

It is found in the cell membrane. This is an uncharacterized protein from Staphylococcus aureus (strain MRSA252).